A 122-amino-acid chain; its full sequence is Prefoldin subunit 1 (122 aa).

A2 is subject to N-acetylalanine.

Belongs to the prefoldin subunit beta family. Heterohexamer of two PFD-alpha type and four PFD-beta type subunits.

Functionally, binds specifically to cytosolic chaperonin (c-CPN) and transfers target proteins to it. Binds to nascent polypeptide chain and promotes folding in an environment in which there are many competing pathways for nonnative proteins. The protein is Prefoldin subunit 1 (PFDN1) of Homo sapiens (Human).